Reading from the N-terminus, the 348-residue chain is Mitogen-activated protein kinase 14B (348 aa).

One can recognise a Protein kinase domain in the interval 25 to 309; it reads YQNLSPVGSG…ASQALAHPYF (285 aa). ATP-binding positions include 31–39 and K54; that span reads VGSGAYGSV. Residue D169 is the Proton acceptor of the active site. The residue at position 181 (T181) is a Phosphothreonine; by MAP2K3. The short motif at 181–183 is the TXY element; sequence TGY. Y183 is modified (phosphotyrosine; by MAP2K3).

This sequence belongs to the protein kinase superfamily. CMGC Ser/Thr protein kinase family. MAP kinase subfamily. Mg(2+) serves as cofactor. Post-translationally, dually phosphorylated on Thr-181 and Tyr-183, which activates the enzyme.

The protein resides in the cytoplasm. The protein localises to the nucleus. The catalysed reaction is L-seryl-[protein] + ATP = O-phospho-L-seryl-[protein] + ADP + H(+). The enzyme catalyses L-threonyl-[protein] + ATP = O-phospho-L-threonyl-[protein] + ADP + H(+). Activated by threonine and tyrosine phosphorylation by the dual specificity kinase, MKK3. Serine/threonine kinase which acts as an essential component of the MAP kinase signal transduction pathway. Mapk14b is one of the four p38 MAPKs which play an important role in the cascades of cellular responses evoked by extracellular stimuli such as pro-inflammatory cytokines or physical stress leading to direct activation of transcription factors. Accordingly, p38 MAPKs phosphorylate a broad range of proteins and it has been estimated that they may have approximately 200 to 300 substrates each. Some of the targets are downstream kinases which are activated through phosphorylation and further phosphorylate additional targets. This Danio rerio (Zebrafish) protein is Mitogen-activated protein kinase 14B (mapk14b).